The sequence spans 196 residues: Peptidyl-tRNA hydrolase (196 aa).

TRNA is bound at residue Tyr-18. The active-site Proton acceptor is the His-23. Residues Phe-69, Asn-71, and Asn-117 each contribute to the tRNA site.

Belongs to the PTH family. Monomer.

The protein localises to the cytoplasm. The enzyme catalyses an N-acyl-L-alpha-aminoacyl-tRNA + H2O = an N-acyl-L-amino acid + a tRNA + H(+). Hydrolyzes ribosome-free peptidyl-tRNAs (with 1 or more amino acids incorporated), which drop off the ribosome during protein synthesis, or as a result of ribosome stalling. Its function is as follows. Catalyzes the release of premature peptidyl moieties from peptidyl-tRNA molecules trapped in stalled 50S ribosomal subunits, and thus maintains levels of free tRNAs and 50S ribosomes. This is Peptidyl-tRNA hydrolase from Vibrio cholerae serotype O1 (strain ATCC 39315 / El Tor Inaba N16961).